Reading from the N-terminus, the 62-residue chain is Zinc finger-containing protein P28b (62 aa).

An RING-type; degenerate zinc finger spans residues 1 to 46 (MKLFTQNDRYFGLLDSCTHIFCITCINIWHKTRRETGASDNCPICR).

The chain is Zinc finger-containing protein P28b from Vaccinia virus (strain Western Reserve) (VACV).